A 254-amino-acid chain; its full sequence is MLTIADKTFQSRLFTGTGKFANKHLMASAIEASGSQLATMALKRVDIRSEQDDILQPIIDAGVNLLPNTSGAKNAKDAIFAAHLAREALGTNWLKLEIHPDPKYLMPDPIETLKAAEQLVKDGFVVLPYCHADPVLCKRLEEVGCAAVMPLGAPIGSNKGIASADFLEIIIDQANVPVIVDAGIGAPSHAARAMEMGADAVLVNTAIAASQQPVEMAIAFKLAVEAGRMAYLAGLAGKVSHAVASSPLTSFLDE.

Catalysis depends on Lys-95, which acts as the Schiff-base intermediate with DXP. 1-deoxy-D-xylulose 5-phosphate is bound by residues Gly-156, 182-183 (AG), and 204-205 (NT).

This sequence belongs to the ThiG family. In terms of assembly, homotetramer. Forms heterodimers with either ThiH or ThiS.

The protein resides in the cytoplasm. The catalysed reaction is [ThiS sulfur-carrier protein]-C-terminal-Gly-aminoethanethioate + 2-iminoacetate + 1-deoxy-D-xylulose 5-phosphate = [ThiS sulfur-carrier protein]-C-terminal Gly-Gly + 2-[(2R,5Z)-2-carboxy-4-methylthiazol-5(2H)-ylidene]ethyl phosphate + 2 H2O + H(+). It participates in cofactor biosynthesis; thiamine diphosphate biosynthesis. Its function is as follows. Catalyzes the rearrangement of 1-deoxy-D-xylulose 5-phosphate (DXP) to produce the thiazole phosphate moiety of thiamine. Sulfur is provided by the thiocarboxylate moiety of the carrier protein ThiS. In vitro, sulfur can be provided by H(2)S. The protein is Thiazole synthase of Vibrio atlanticus (strain LGP32) (Vibrio splendidus (strain Mel32)).